The sequence spans 67 residues: Protein AaeX (67 aa).

The next 2 helical transmembrane spans lie at 10-30 (FGLS…LFFV) and 43-63 (FVWH…YLLF).

This sequence belongs to the AaeX family.

It localises to the cell membrane. The polypeptide is Protein AaeX (Pectobacterium carotovorum subsp. carotovorum (strain PC1)).